Consider the following 108-residue polypeptide: Thiosulfate sulfurtransferase GlpE (108 aa).

Residues 17-105 (QEKEAVLVDI…WQRQFPAEVA (89 aa)) form the Rhodanese domain. Cysteine 65 functions as the Cysteine persulfide intermediate in the catalytic mechanism.

It belongs to the GlpE family.

The protein resides in the cytoplasm. It carries out the reaction thiosulfate + hydrogen cyanide = thiocyanate + sulfite + 2 H(+). The catalysed reaction is thiosulfate + [thioredoxin]-dithiol = [thioredoxin]-disulfide + hydrogen sulfide + sulfite + 2 H(+). Transferase that catalyzes the transfer of sulfur from thiosulfate to thiophilic acceptors such as cyanide or dithiols. May function in a CysM-independent thiosulfate assimilation pathway by catalyzing the conversion of thiosulfate to sulfite, which can then be used for L-cysteine biosynthesis. This is Thiosulfate sulfurtransferase GlpE from Shigella dysenteriae serotype 1 (strain Sd197).